Consider the following 80-residue polypeptide: DNA-binding protein HU-like (80 aa).

This sequence belongs to the bacterial histone-like protein family.

Histone-like DNA-binding protein which is capable of wrapping DNA to stabilize it, and thus to prevent its denaturation under extreme environmental conditions. This Rickettsia prowazekii (strain Madrid E) protein is DNA-binding protein HU-like.